The following is a 490-amino-acid chain: Betaine aldehyde dehydrogenase (490 aa).

Residues Thr26, Ile27, and Asp93 each coordinate K(+). 150 to 152 lines the NAD(+) pocket; sequence GAW. The Charge relay system role is filled by Lys162. Residue 176 to 179 participates in NAD(+) binding; that stretch reads KPSE. Val180 is a K(+) binding site. 230–233 provides a ligand contact to NAD(+); that stretch reads GTST. Residue Leu246 coordinates K(+). Catalysis depends on Glu252, which acts as the Proton acceptor. 3 residues coordinate NAD(+): Gly254, Cys286, and Glu387. Residue Cys286 is the Nucleophile of the active site. Cysteine sulfenic acid (-SOH) is present on Cys286. K(+) is bound by residues Lys457 and Gly460. Glu464 acts as the Charge relay system in catalysis.

This sequence belongs to the aldehyde dehydrogenase family. As to quaternary structure, dimer of dimers. It depends on K(+) as a cofactor.

It catalyses the reaction betaine aldehyde + NAD(+) + H2O = glycine betaine + NADH + 2 H(+). It functions in the pathway amine and polyamine biosynthesis; betaine biosynthesis via choline pathway; betaine from betaine aldehyde: step 1/1. Functionally, involved in the biosynthesis of the osmoprotectant glycine betaine. Catalyzes the irreversible oxidation of betaine aldehyde to the corresponding acid. This is Betaine aldehyde dehydrogenase from Pseudomonas aeruginosa (strain UCBPP-PA14).